The following is a 1342-amino-acid chain: DNA-directed RNA polymerase subunit beta (1342 aa).

The protein belongs to the RNA polymerase beta chain family. In terms of assembly, the RNAP catalytic core consists of 2 alpha, 1 beta, 1 beta' and 1 omega subunit. When a sigma factor is associated with the core the holoenzyme is formed, which can initiate transcription.

It carries out the reaction RNA(n) + a ribonucleoside 5'-triphosphate = RNA(n+1) + diphosphate. In terms of biological role, DNA-dependent RNA polymerase catalyzes the transcription of DNA into RNA using the four ribonucleoside triphosphates as substrates. This chain is DNA-directed RNA polymerase subunit beta, found in Salmonella typhi.